The primary structure comprises 1280 residues: Multidrug resistance protein 1 (1280 aa).

At 1-72 (MSRAHAAYAN…YADATDRVLM (72 aa)) the chain is on the cytoplasmic side. One can recognise an ABC transmembrane type-1 1 domain in the interval 72–357 (MIAGTAFAVA…VAPSRTAFTE (286 aa)). The next 6 membrane-spanning stretches (helical) occupy residues 73-93 (IAGT…SFIF), 120-140 (YVGI…TVAA), 189-209 (KLSQ…AGFV), 216-236 (LMMI…GSIV), 297-317 (LSAA…FFFG), and 326-345 (RDMA…SFGL). Over 346-712 (GFVAPSRTAF…MRMNKDKAWA (367 aa)) the chain is Cytoplasmic. One can recognise an ABC transporter 1 domain in the interval 391 to 634 (IEFRNVRFAY…DGEFAAVAKM (244 aa)). Position 426-433 (426-433 (GASGCGKS)) interacts with ATP. A run of 6 helical transmembrane segments spans residues 713–733 (VALG…SSIV), 762–781 (PLFI…HGFY), 837–857 (IGLK…GFIY), 858–878 (QWKL…CSLT), 938–958 (IIAG…YALC), and 976–996 (VMIA…AGAF). The 290-residue stretch at 713–1002 (VALGILSSVV…AGAFATKLAD (290 aa)) folds into the ABC transmembrane type-1 2 domain. In terms of domain architecture, ABC transporter 2 spans 1036–1274 (IEYRNVQFIY…GGEYKTRYDL (239 aa)). 1071-1078 (GQTGCGKS) lines the ATP pocket. Asn-1113 carries an N-linked (GlcNAc...) asparagine glycan.

The protein belongs to the ABC transporter superfamily. ABCB family. Multidrug resistance exporter (TC 3.A.1.201) subfamily.

The protein localises to the membrane. It carries out the reaction ATP + H2O + xenobioticSide 1 = ADP + phosphate + xenobioticSide 2.. Energy-dependent efflux pump responsible for decreased drug accumulation in multi-drug-resistant cells. Confers vinblastine resistance. The protein is Multidrug resistance protein 1 (MDR1) of Leishmania enriettii.